The chain runs to 137 residues: Proofreading thioesterase EntH (137 aa).

Glu-63 serves as the catalytic Nucleophile or proton acceptor.

It belongs to the thioesterase PaaI family. As to quaternary structure, homotetramer. Dimer of dimers. Interacts specifically with the aryl carrier protein (ArCP) domain of EntB.

It localises to the cytoplasm. It functions in the pathway siderophore biosynthesis; enterobactin biosynthesis. In terms of biological role, required for optimal enterobactin synthesis. Acts as a proofreading enzyme that prevents EntB misacylation by hydrolyzing the thioester bound existing between EntB and wrongly charged molecules. This is Proofreading thioesterase EntH from Citrobacter koseri (strain ATCC BAA-895 / CDC 4225-83 / SGSC4696).